Consider the following 540-residue polypeptide: Peptide chain release factor 3 (540 aa).

Residues 14 to 283 (ELRRNFAIIS…YFLNYALKPG (270 aa)) enclose the tr-type G domain. Residues 23-30 (SHPDAGKT), 91-95 (DTPGH), and 145-148 (NKLD) contribute to the GTP site.

The protein belongs to the TRAFAC class translation factor GTPase superfamily. Classic translation factor GTPase family. PrfC subfamily.

It localises to the cytoplasm. Functionally, increases the formation of ribosomal termination complexes and stimulates activities of RF-1 and RF-2. It binds guanine nucleotides and has strong preference for UGA stop codons. It may interact directly with the ribosome. The stimulation of RF-1 and RF-2 is significantly reduced by GTP and GDP, but not by GMP. In Trichormus variabilis (strain ATCC 29413 / PCC 7937) (Anabaena variabilis), this protein is Peptide chain release factor 3.